Consider the following 452-residue polypeptide: Methionine aminopeptidase 2-1 (452 aa).

Residues 1–100 (MAAKVADDVA…VRIDEVFPND (100 aa)) form a disordered region. Acidic residues predominate over residues 37 to 51 (EHDDSDDDNEAEDGA). Residues 60-73 (KKKKKRKPRKKKKA) are compositionally biased toward basic residues. His205 serves as a coordination point for substrate. A divalent metal cation is bound by residues Asp225, Asp236, and His305. His313 is a binding site for substrate. A divalent metal cation is bound by residues Glu338 and Glu433.

Belongs to the peptidase M24A family. Methionine aminopeptidase eukaryotic type 2 subfamily. Co(2+) is required as a cofactor. The cofactor is Zn(2+). It depends on Mn(2+) as a cofactor. Requires Fe(2+) as cofactor.

The protein resides in the cytoplasm. It carries out the reaction Release of N-terminal amino acids, preferentially methionine, from peptides and arylamides.. Its function is as follows. Cotranslationally removes the N-terminal methionine from nascent proteins. The N-terminal methionine is often cleaved when the second residue in the primary sequence is small and uncharged (Met-Ala-, Cys, Gly, Pro, Ser, Thr, or Val). In Pyrenophora teres f. teres (strain 0-1) (Barley net blotch fungus), this protein is Methionine aminopeptidase 2-1.